The sequence spans 645 residues: 1-deoxy-D-xylulose-5-phosphate synthase 1 (645 aa).

Thiamine diphosphate contacts are provided by residues His79 and 120-122 (GHS). Asp151 is a Mg(2+) binding site. Residues 152-153 (GS), Asn180, Tyr291, and Glu373 contribute to the thiamine diphosphate site. Mg(2+) is bound at residue Asn180.

It belongs to the transketolase family. DXPS subfamily. In terms of assembly, homodimer. Requires Mg(2+) as cofactor. Thiamine diphosphate serves as cofactor.

The enzyme catalyses D-glyceraldehyde 3-phosphate + pyruvate + H(+) = 1-deoxy-D-xylulose 5-phosphate + CO2. It participates in metabolic intermediate biosynthesis; 1-deoxy-D-xylulose 5-phosphate biosynthesis; 1-deoxy-D-xylulose 5-phosphate from D-glyceraldehyde 3-phosphate and pyruvate: step 1/1. Its function is as follows. Catalyzes the acyloin condensation reaction between C atoms 2 and 3 of pyruvate and glyceraldehyde 3-phosphate to yield 1-deoxy-D-xylulose-5-phosphate (DXP). This Rhodospirillum rubrum (strain ATCC 11170 / ATH 1.1.1 / DSM 467 / LMG 4362 / NCIMB 8255 / S1) protein is 1-deoxy-D-xylulose-5-phosphate synthase 1.